Reading from the N-terminus, the 82-residue chain is Large ribosomal subunit protein bL31B (82 aa).

This sequence belongs to the bacterial ribosomal protein bL31 family. Type B subfamily. In terms of assembly, part of the 50S ribosomal subunit.

This Bacillus velezensis (strain DSM 23117 / BGSC 10A6 / LMG 26770 / FZB42) (Bacillus amyloliquefaciens subsp. plantarum) protein is Large ribosomal subunit protein bL31B.